Consider the following 94-residue polypeptide: Co-chaperonin GroES (94 aa).

It belongs to the GroES chaperonin family. Heptamer of 7 subunits arranged in a ring. Interacts with the chaperonin GroEL.

Its subcellular location is the cytoplasm. Together with the chaperonin GroEL, plays an essential role in assisting protein folding. The GroEL-GroES system forms a nano-cage that allows encapsulation of the non-native substrate proteins and provides a physical environment optimized to promote and accelerate protein folding. GroES binds to the apical surface of the GroEL ring, thereby capping the opening of the GroEL channel. The sequence is that of Co-chaperonin GroES from Caldanaerobacter subterraneus subsp. tengcongensis (strain DSM 15242 / JCM 11007 / NBRC 100824 / MB4) (Thermoanaerobacter tengcongensis).